The primary structure comprises 429 residues: MSITPSFSRRSVVSLLAAGAFSSMSAFAQFRVEVSGVGMTQLPIAIAPFRGEAQSPQKIGSIVKADLERSGMFRGVDAGGVVADENTRPDLASWRQKGADAMVTGSVSPLADGRFDVRLRLWDVVREQDLGGQSYTVTKSDLRLSAHRVSDFVYEKLTGEKGIFSTRIAYVTKAGQRYTLWVADSDGESAQSALASPEPIISPAWSPSGAQLAYVSFESRKPVIYSHDVATGKRRLLANFRGSNSAPAWSPDGSQLVATLSQAGGSQIYSIGLNGGDPKRLTQSSSIDTEPAFSPDGRLIYFVSDRGGSPQIYRMSPAGGNAERVTFTGSYNISPVVSPDGRWLAYVSRVGGGFKLHVMELSTGTVTSITDTSADESPSFAPNSRLIVYATQQQGKEALMTTTLDGKIKARLSGAGGDIREPDWGPFQR.

Residues 1–28 (MSITPSFSRRSVVSLLAAGAFSSMSAFA) form the signal peptide.

Belongs to the TolB family. In terms of assembly, the Tol-Pal system is composed of five core proteins: the inner membrane proteins TolA, TolQ and TolR, the periplasmic protein TolB and the outer membrane protein Pal. They form a network linking the inner and outer membranes and the peptidoglycan layer.

Its subcellular location is the periplasm. Its function is as follows. Part of the Tol-Pal system, which plays a role in outer membrane invagination during cell division and is important for maintaining outer membrane integrity. The polypeptide is Tol-Pal system protein TolB (Polaromonas naphthalenivorans (strain CJ2)).